Consider the following 744-residue polypeptide: NAD(P)H-quinone oxidoreductase subunit 5, chloroplastic (744 aa).

The next 16 helical transmembrane spans lie at 9 to 29 (WIIP…LLFF), 40 to 60 (WVFP…DLSI), 89 to 109 (IDSL…LVLI), 125 to 145 (FTYL…SNLI), 147 to 167 (VYIF…FWFT), 185 to 205 (GDFG…SLEF), 219 to 239 (NEVN…GSVA), 258 to 278 (TPIS…FLVA), 280 to 300 (LLPL…IGII), 327 to 347 (LGYM…FHLI), 354 to 374 (ALLF…VGYS), 396 to 416 (NAFL…CFWS), 425 to 445 (WLYS…TAFY), 552 to 572 (LFSM…GISF), 612 to 632 (FSVS…KPVF), and 724 to 744 (ISSY…SIFI).

The protein belongs to the complex I subunit 5 family. As to quaternary structure, NDH is composed of at least 16 different subunits, 5 of which are encoded in the nucleus.

The protein localises to the plastid. The protein resides in the chloroplast thylakoid membrane. It carries out the reaction a plastoquinone + NADH + (n+1) H(+)(in) = a plastoquinol + NAD(+) + n H(+)(out). The enzyme catalyses a plastoquinone + NADPH + (n+1) H(+)(in) = a plastoquinol + NADP(+) + n H(+)(out). Functionally, NDH shuttles electrons from NAD(P)H:plastoquinone, via FMN and iron-sulfur (Fe-S) centers, to quinones in the photosynthetic chain and possibly in a chloroplast respiratory chain. The immediate electron acceptor for the enzyme in this species is believed to be plastoquinone. Couples the redox reaction to proton translocation, and thus conserves the redox energy in a proton gradient. The polypeptide is NAD(P)H-quinone oxidoreductase subunit 5, chloroplastic (ndhF) (Cicer arietinum (Chickpea)).